Here is a 42-residue protein sequence, read N- to C-terminus: Photosystem I reaction center subunit IX (42 aa).

Residues 7–27 (YLSVAPVLSTLWFGALAGLLI) form a helical membrane-spanning segment.

This sequence belongs to the PsaJ family.

The protein localises to the plastid. It is found in the chloroplast thylakoid membrane. May help in the organization of the PsaE and PsaF subunits. The sequence is that of Photosystem I reaction center subunit IX from Agrostis stolonifera (Creeping bentgrass).